A 142-amino-acid chain; its full sequence is Large ribosomal subunit protein uL13 (142 aa).

Belongs to the universal ribosomal protein uL13 family. In terms of assembly, part of the 50S ribosomal subunit.

In terms of biological role, this protein is one of the early assembly proteins of the 50S ribosomal subunit, although it is not seen to bind rRNA by itself. It is important during the early stages of 50S assembly. This chain is Large ribosomal subunit protein uL13, found in Marinomonas sp. (strain MWYL1).